Consider the following 445-residue polypeptide: 3-phosphoshikimate 1-carboxyvinyltransferase (445 aa).

3 residues coordinate 3-phosphoshikimate: K21, S22, and R26. A phosphoenolpyruvate-binding site is contributed by K21. Positions 92 and 120 each coordinate phosphoenolpyruvate. 3-phosphoshikimate is bound by residues S165, Q166, D307, and K334. Position 166 (Q166) interacts with phosphoenolpyruvate. D307 acts as the Proton acceptor in catalysis. Phosphoenolpyruvate is bound by residues R338, R379, and K405.

Belongs to the EPSP synthase family. Monomer.

Its subcellular location is the cytoplasm. It catalyses the reaction 3-phosphoshikimate + phosphoenolpyruvate = 5-O-(1-carboxyvinyl)-3-phosphoshikimate + phosphate. The protein operates within metabolic intermediate biosynthesis; chorismate biosynthesis; chorismate from D-erythrose 4-phosphate and phosphoenolpyruvate: step 6/7. Functionally, catalyzes the transfer of the enolpyruvyl moiety of phosphoenolpyruvate (PEP) to the 5-hydroxyl of shikimate-3-phosphate (S3P) to produce enolpyruvyl shikimate-3-phosphate and inorganic phosphate. The chain is 3-phosphoshikimate 1-carboxyvinyltransferase from Chlamydia abortus (strain DSM 27085 / S26/3) (Chlamydophila abortus).